The primary structure comprises 191 residues: Cell division protein SepF (191 aa).

The segment covering 156-167 (EEASPSNMSNKG) has biased composition (polar residues). The tract at residues 156 to 191 (EEASPSNMSNKGNDLISKETSPAPEPAWGETVATAL) is disordered.

The protein belongs to the SepF family. In terms of assembly, homodimer. Interacts with FtsZ.

The protein resides in the cytoplasm. Cell division protein that is part of the divisome complex and is recruited early to the Z-ring. Probably stimulates Z-ring formation, perhaps through the cross-linking of FtsZ protofilaments. Its function overlaps with FtsA. The protein is Cell division protein SepF of Prochlorococcus marinus (strain NATL1A).